A 110-amino-acid polypeptide reads, in one-letter code: Cation efflux system protein CusF (110 aa).

The signal sequence occupies residues 1 to 21 (MKKALQVAMFSLFTVIGFNAQ).

As to quaternary structure, the cus efflux system is composed of CusA, CusB, CusC and CusF. Interacts with copper-exporting P-type ATPase CopA; when this protein is precharged with copper it binds very little CopA.

It localises to the periplasm. Functionally, part of a cation efflux system that mediates resistance to copper and silver. Binds one copper per polypeptide. This Escherichia coli (strain K12) protein is Cation efflux system protein CusF (cusF).